A 593-amino-acid chain; its full sequence is MKRTVYCGEVTDALVGQEVTVNGWVQRRRDHGSLIFVDLRDRTGLVQVVFDVEECGADLFRKAEQVRSEYVLAVRGRLVHRTPEAVNPNIPTGRFEIRALDLRILSPAKTPPFYIQDDLDVDETVRLKYRYLDLRRPEMQRNLILRHRVTKAVRDFFDEHGFLEIETPMLTKSTPEGARDYLVPSRVNPGKFYALPQSPQIFKQLCMVSGLERYVQIVRCFRDEDLRADRQPEFTQIDVEMSFVERDDVLSMMEQMVARVFRDALGVEVPTPFKRLTYAEAMARYGSDKPDLRFGMELVDVSDVAAGCGFGVFKGAVEAGGQVKGINAKGCGGYSRKQIDELTEFVKTYKAKGLAYIALGEGGEVRSSFTKFLTEAETAEIVRRLEGEPGDLLLFVADQPDVVAAALGALRVEMGNRLGLRKPGEFNLLWVIDFPLLEWDEEENRFVAVHHPFTSPHPEDLDKVFKEGATREELAAIRANAYDLVLNGVELGGGSIRIHQRPLQNRMFELLGFTPEEAQAKFGFLLEAFEYGAPPHGGIAFGLDRFVMLLAGRQSIRDVIAFPKTAKATDLMTDAPSEVAPKQLQELHIRTTV.

Glu-176 lines the L-aspartate pocket. Positions 200–203 are aspartate; it reads QIFK. Residue Arg-222 coordinates L-aspartate. ATP is bound by residues 222–224 and Gln-231; that span reads RDE. His-450 contacts L-aspartate. An ATP-binding site is contributed by Glu-490. An L-aspartate-binding site is contributed by Arg-497. Residue 542–545 participates in ATP binding; that stretch reads GLDR.

It belongs to the class-II aminoacyl-tRNA synthetase family. Type 1 subfamily. As to quaternary structure, homodimer.

The protein resides in the cytoplasm. The catalysed reaction is tRNA(Asx) + L-aspartate + ATP = L-aspartyl-tRNA(Asx) + AMP + diphosphate. Functionally, aspartyl-tRNA synthetase with relaxed tRNA specificity since it is able to aspartylate not only its cognate tRNA(Asp) but also tRNA(Asn). Reaction proceeds in two steps: L-aspartate is first activated by ATP to form Asp-AMP and then transferred to the acceptor end of tRNA(Asp/Asn). The chain is Aspartate--tRNA(Asp/Asn) ligase from Symbiobacterium thermophilum (strain DSM 24528 / JCM 14929 / IAM 14863 / T).